The chain runs to 312 residues: Serpentine receptor class gamma-31 (312 aa).

7 helical membrane-spanning segments follow: residues 6–26 (LITQ…TVVF), 38–58 (FLKL…NFYI), 92–112 (FIFC…LTSI), 132–152 (TYIL…PLLV), 180–200 (FILV…IICW), 218–238 (LFLV…IAML), and 259–279 (LLSP…LIIF).

The protein belongs to the nematode receptor-like protein srg family.

The protein resides in the membrane. This chain is Serpentine receptor class gamma-31 (srg-31), found in Caenorhabditis elegans.